The following is an 842-amino-acid chain: MTLHSTNVTRTDSKRVKVYLLENNEWKDTGTGYCHGEVVSTELVDNKREEAFLLVTNENEPHQVLLRSKLEGNIEYQRQEETLIVWKDVEGKDIALSFEESLGCDTLCEFVVNVQRSIEPNISLVAVKSVDNGMGSIHEIITGPVALPSIETKQNTTTLLDALKILNDNTAFEYLKTETVEYVLKNNYIDLLIAHFHKAETEKIPRDLFLISNILKTMILYNQRDIIESLVEDKRIMGVVGILEYDTEFPTSKANHRKCLESEAPSFKEIIPLENEELKTVIKKCFRLQFLKDVVLVQFLDDNNLGLITDIILDLETCIIDSLQTDPFLDNLLQLYSKDKIYNSELTDESTDLIQKRKEGIKLLHQCIQMSRNLEHMDKSKFYKVLVKKGLFNLLDYAFNFEKDNNLRILATDTIIAIVEHDILLIHNVQKEISQHNDRQSLCLNGNQNEAKSSEANATVDLTLLEILSTILLTDNNPGLREQVVQALNTLLHPEGCIGDGFDNQLDNGLDFDDNILLRKDSNNLDDDFQEQTGMSKIPPFTLNSSQQLENQIAEYFKQFYIQIAPKLFGPLIENNCMSDEERQKYVNDDVLMIHLVKLVSFICSEHERLISRKFVLENGILDSISNLINPGYRLQLRLTALRCIKNIICLDDKYYHRHMISNELYSPIMKLMEEHLLEDNLANSALQDFFRIIASECHVFKDDSELFNYSDNAYNINATELHRRSGSIPSSNFTMLNKHINDKYPEVLDKLLYITFVKQLREQYKEHSKLLPNGKKRKISADNVNDFDGDKINNGKKGQLSKNKVMNYNSFETHIDDRASSTDSQPATCLVGSPAAYDNAV.

In terms of assembly, regulatory subunit 3 (R3) of the histone H2A phosphatase complex (HTP-C) consisting of PPH3, PSY2 and PSY4.

It localises to the nucleus. Functionally, core regulatory subunit of the histone H2A phosphatase complex, which dephosphorylates H2AS128ph (gamma-H2A) that has been displaced from sites of DNA lesions in the double-stranded DNA break repair process. Dephosphorylation is necessary for efficient recovery from the DNA damage checkpoint. In Candida glabrata (strain ATCC 2001 / BCRC 20586 / JCM 3761 / NBRC 0622 / NRRL Y-65 / CBS 138) (Yeast), this protein is Serine/threonine-protein phosphatase 4 regulatory subunit 3 (PSY2).